The primary structure comprises 355 residues: RNA 3'-terminal phosphate cyclase (355 aa).

Residues glutamine 100 and histidine 300–glutamine 304 contribute to the ATP site. The Tele-AMP-histidine intermediate role is filled by histidine 325.

This sequence belongs to the RNA 3'-terminal cyclase family. Type 1 subfamily.

The protein localises to the cytoplasm. The catalysed reaction is a 3'-end 3'-phospho-ribonucleotide-RNA + ATP = a 3'-end 2',3'-cyclophospho-ribonucleotide-RNA + AMP + diphosphate. Catalyzes the conversion of 3'-phosphate to a 2',3'-cyclic phosphodiester at the end of RNA. The mechanism of action of the enzyme occurs in 3 steps: (A) adenylation of the enzyme by ATP; (B) transfer of adenylate to an RNA-N3'P to produce RNA-N3'PP5'A; (C) and attack of the adjacent 2'-hydroxyl on the 3'-phosphorus in the diester linkage to produce the cyclic end product. The biological role of this enzyme is unknown but it is likely to function in some aspects of cellular RNA processing. The protein is RNA 3'-terminal phosphate cyclase of Methanosarcina acetivorans (strain ATCC 35395 / DSM 2834 / JCM 12185 / C2A).